A 563-amino-acid chain; its full sequence is BOS complex subunit NCLN (563 aa).

The signal sequence occupies residues 1-42 (MLEEAGEVLENMLKASCLPLGFIVFLPAVLLLVAPPLPAADA). Residues 43 to 522 (AHEFTVYRMQ…VMNAYRVKPA (480 aa)) lie on the Lumenal side of the membrane. Residues asparagine 241 and asparagine 428 are each glycosylated (N-linked (GlcNAc...) asparagine). Residues 523-543 (IFDLLLAVCIGAYLGMAYTAV) form a helical membrane-spanning segment. Over 544–563 (QHFDLLYKTVQRLLVKAKTQ) the chain is Cytoplasmic.

This sequence belongs to the nicastrin family. As to quaternary structure, component of the back of Sec61 (BOS) complex, composed of NCLN/Nicalin, NOMO1 and TMEM147. The BOS complex is part of the multi-pass translocon (MPT) complex, composed of three subcomplexes, the GEL complex (composed of RAB5IF/OPTI and TMCO1), the BOS complex (composed of NCLN/Nicalin, NOMO1 and TMEM147) and the PAT complex (composed of WDR83OS/Asterix and CCDC47). The MPT complex associates with the SEC61 complex.

It localises to the endoplasmic reticulum membrane. Its function is as follows. Component of the multi-pass translocon (MPT) complex that mediates insertion of multi-pass membrane proteins into the lipid bilayer of membranes. The MPT complex takes over after the SEC61 complex: following membrane insertion of the first few transmembrane segments of proteins by the SEC61 complex, the MPT complex occludes the lateral gate of the SEC61 complex to promote insertion of subsequent transmembrane regions. May antagonize Nodal signaling and subsequent organization of axial structures during mesodermal patterning, via its interaction with NOMO. The protein is BOS complex subunit NCLN of Canis lupus familiaris (Dog).